We begin with the raw amino-acid sequence, 73 residues long: uncharacterized protein (73 aa).

In terms of processing, N-glycosylated.

This is an uncharacterized protein from Saccharomyces cerevisiae (strain ATCC 204508 / S288c) (Baker's yeast).